A 399-amino-acid chain; its full sequence is Glucose-1-phosphate adenylyltransferase (399 aa).

Residues tyrosine 100, glycine 165, 180 to 181 (EK), and serine 191 each bind alpha-D-glucose 1-phosphate.

Belongs to the bacterial/plant glucose-1-phosphate adenylyltransferase family. In terms of assembly, homotetramer.

The enzyme catalyses alpha-D-glucose 1-phosphate + ATP + H(+) = ADP-alpha-D-glucose + diphosphate. It functions in the pathway glycan biosynthesis; glycogen biosynthesis. Involved in the biosynthesis of ADP-glucose, a building block required for the elongation reactions to produce glycogen. Catalyzes the reaction between ATP and alpha-D-glucose 1-phosphate (G1P) to produce pyrophosphate and ADP-Glc. The sequence is that of Glucose-1-phosphate adenylyltransferase from Desulforamulus reducens (strain ATCC BAA-1160 / DSM 100696 / MI-1) (Desulfotomaculum reducens).